A 363-amino-acid chain; its full sequence is Type-1 angiotensin II receptor B (363 aa).

At 1–27 (MLSNISAGENSEVEKIVVKCSKSGMHN) the chain is on the extracellular side. N-linked (GlcNAc...) asparagine glycosylation occurs at asparagine 4. Disulfide bonds link cysteine 20–cysteine 274 and cysteine 103–cysteine 182. A helical transmembrane segment spans residues 28 to 57 (YIFITIPIIYSTIFVVGVFGNSLVVIVIYS). Over 58–63 (YMKMKT) the chain is Cytoplasmic. The helical transmembrane segment at 64–91 (MASVFLMNLALSDLCFVITLPLWAVYTA) threads the bilayer. Topologically, residues 92 to 100 (MHYHWPFGD) are extracellular. The chain crosses the membrane as a helical span at residues 101–127 (LLCKIASTAITLNLYTTVFLLTCLSID). Residues 128 to 143 (RYSAIVHPMKSRIRRT) lie on the Cytoplasmic side of the membrane. Residues 144-167 (VMVARLTCVGIWLVAFLASLPSVI) traverse the membrane as a helical segment. Residues 168–192 (YRQIFIFPDTNQTVCALVYHSGHIY) are Extracellular-facing. Arginine 169 provides a ligand contact to angiotensin II. Asparagine 178 carries an N-linked (GlcNAc...) asparagine glycan. The angiotensin II site is built by tyrosine 186 and lysine 201. A helical membrane pass occupies residues 193 to 218 (FMVGMSLVKNIVGFFIPFVIILTSYT). The Cytoplasmic segment spans residues 219-239 (LIGKTLKEVYRAQRARNDDIF). Residues 240–268 (KMIVAVVLLFFFCWIPHQVFTFLDVLIQM) form a helical membrane-spanning segment. Topologically, residues 269 to 278 (DVIQNCKMYD) are extracellular. Residues 279–304 (IVDTGMPITICIAYFNSCLNPFLYGF) traverse the membrane as a helical segment. Residues 305-363 (FGKKFRKHFLQLIKYIPPKMRTHASVNTKSSTVSQRLSDTKCASNKIALWIFDIEEHCK) are Cytoplasmic-facing. 2 S-palmitoyl cysteine lipidation sites follow: cysteine 346 and cysteine 362.

Belongs to the G-protein coupled receptor 1 family. In terms of processing, C-terminal Ser or Thr residues may be phosphorylated. Heart membranes, follicular oocytes.

Its subcellular location is the cell membrane. Functionally, receptor for angiotensin II, a vasoconstricting peptide, which acts as a key regulator of blood pressure and sodium retention by the kidney. The activated receptor in turn couples to G-alpha proteins G(q) (GNAQ, GNA11, GNA14 or GNA15) and thus activates phospholipase C and increases the cytosolic Ca(2+) concentrations, which in turn triggers cellular responses such as stimulation of protein kinase C. This Xenopus laevis (African clawed frog) protein is Type-1 angiotensin II receptor B (agtr1-b).